The following is a 734-amino-acid chain: ABC transporter D family member 1 (734 aa).

The next 4 helical transmembrane spans lie at 52 to 72 (IIKILYAKPVIPLTLFLILFG), 112 to 132 (FAIGGSALLAAIINFIVSIMA), 177 to 197 (FTTLLASIVSQCITGPMVVVY), and 204 to 224 (TTIDWYAPLIVYGFFFLGYLI). The 289-residue stretch at 63-351 (PLTLFLILFG…VEEEQAKIQF (289 aa)) folds into the ABC transmembrane type-1 domain. The span at 271 to 286 (HPEKRFDNNDYDHGYE) shows a compositional bias: basic and acidic residues. The tract at residues 271–296 (HPEKRFDNNDYDHGYESDDSDQSCDE) is disordered. The stretch at 332–359 (DSNDQKEELLVEEEQAKIQFEALLKNKK) forms a coiled coil. The helical transmembrane segment at 374-394 (LFTYLSPIANYFIIAIPVFFL) threads the bilayer. The 238-residue stretch at 492 to 729 (ITLDDVTYFT…NNNNTNKIAE (238 aa)) folds into the ABC transporter domain. Position 525-532 (525-532 (GPSGSGKS)) interacts with ATP. Residues 712-725 (QSNNINNNNNNNTN) show a composition bias toward low complexity. Residues 712–734 (QSNNINNNNNNNTNKIAEDSVFD) are disordered.

It belongs to the ABC transporter superfamily. ABCD family. Peroxisomal fatty acyl CoA transporter (TC 3.A.1.203) subfamily.

It is found in the membrane. It carries out the reaction (9Z)-octadecenoyl-CoA(in) = (9Z)-octadecenoyl-CoA(out). This Dictyostelium discoideum (Social amoeba) protein is ABC transporter D family member 1 (abcD1).